The chain runs to 635 residues: Threonine--tRNA ligase (635 aa).

The TGS domain maps to 1–61 (MINIKFPDGS…NHDCELRLIT (61 aa)). The catalytic stretch occupies residues 242–533 (DHRKIGKALD…LIEHYAGNMP (292 aa)). Zn(2+) is bound by residues Cys333, His384, and His510.

It belongs to the class-II aminoacyl-tRNA synthetase family. Homodimer. Zn(2+) is required as a cofactor.

It localises to the cytoplasm. It carries out the reaction tRNA(Thr) + L-threonine + ATP = L-threonyl-tRNA(Thr) + AMP + diphosphate + H(+). Its function is as follows. Catalyzes the attachment of threonine to tRNA(Thr) in a two-step reaction: L-threonine is first activated by ATP to form Thr-AMP and then transferred to the acceptor end of tRNA(Thr). Also edits incorrectly charged L-seryl-tRNA(Thr). The chain is Threonine--tRNA ligase from Francisella philomiragia subsp. philomiragia (strain ATCC 25017 / CCUG 19701 / FSC 153 / O#319-036).